The chain runs to 1013 residues: Prominin-like protein (1013 aa).

The chain crosses the membrane as a helical span at residues 32–52 (IAYLAICGLSVAIFGFALATL). 2 N-linked (GlcNAc...) asparagine glycosylation sites follow: N99 and N116. 3 consecutive transmembrane segments (helical) span residues 215–235 (CGICLLILIIGLIFGIIIAFV), 489–509 (VVSLIVCLLILLVLFILIFAL), and 535–555 (LLLAILLIFCVFSFIALVGLF). N576, N618, N803, and N824 each carry an N-linked (GlcNAc...) asparagine glycan. The chain crosses the membrane as a helical span at residues 852–872 (INGFWVGILLCALLFLPILFV). The interval 918-1013 (ANVPKKRRKA…YYYPGASEQD (96 aa)) is disordered. N-linked (GlcNAc...) asparagine glycosylation occurs at N949. Gly residues predominate over residues 950-963 (RSGGDRGGGGGDGA).

The protein belongs to the prominin family.

The protein resides in the membrane. The protein is Prominin-like protein of Drosophila melanogaster (Fruit fly).